Reading from the N-terminus, the 265-residue chain is Shikimate dehydrogenase (NADP(+)) (265 aa).

Residues Ser15–Ser17 and Thr62 contribute to the shikimate site. Lys66 functions as the Proton acceptor in the catalytic mechanism. NADP(+) is bound at residue Glu78. Asn87 and Asp102 together coordinate shikimate. NADP(+) contacts are provided by residues Gly126–Val130, Asn150–Lys155, and Val210. Tyr212 is a shikimate binding site. Gly233 serves as a coordination point for NADP(+).

Belongs to the shikimate dehydrogenase family. As to quaternary structure, homodimer.

It catalyses the reaction shikimate + NADP(+) = 3-dehydroshikimate + NADPH + H(+). Its pathway is metabolic intermediate biosynthesis; chorismate biosynthesis; chorismate from D-erythrose 4-phosphate and phosphoenolpyruvate: step 4/7. Functionally, involved in the biosynthesis of the chorismate, which leads to the biosynthesis of aromatic amino acids. Catalyzes the reversible NADPH linked reduction of 3-dehydroshikimate (DHSA) to yield shikimate (SA). The chain is Shikimate dehydrogenase (NADP(+)) from Pelagibacter ubique (strain HTCC1062).